The primary structure comprises 163 residues: NADH-quinone oxidoreductase subunit I (163 aa).

2 4Fe-4S ferredoxin-type domains span residues 53-83 and 94-123; these read LRRY…IEAG and VRYD…EGPN. [4Fe-4S] cluster-binding residues include cysteine 63, cysteine 66, cysteine 69, cysteine 73, cysteine 103, cysteine 106, cysteine 109, and cysteine 113.

Belongs to the complex I 23 kDa subunit family. In terms of assembly, NDH-1 is composed of 14 different subunits. Subunits NuoA, H, J, K, L, M, N constitute the membrane sector of the complex. It depends on [4Fe-4S] cluster as a cofactor.

Its subcellular location is the cell inner membrane. The catalysed reaction is a quinone + NADH + 5 H(+)(in) = a quinol + NAD(+) + 4 H(+)(out). NDH-1 shuttles electrons from NADH, via FMN and iron-sulfur (Fe-S) centers, to quinones in the respiratory chain. The immediate electron acceptor for the enzyme in this species is believed to be ubiquinone. Couples the redox reaction to proton translocation (for every two electrons transferred, four hydrogen ions are translocated across the cytoplasmic membrane), and thus conserves the redox energy in a proton gradient. This Bartonella bacilliformis (strain ATCC 35685 / KC583 / Herrer 020/F12,63) protein is NADH-quinone oxidoreductase subunit I.